The chain runs to 396 residues: Ribosomal RNA large subunit methyltransferase I (396 aa).

The 80-residue stretch at 2–81 (SVRLVLAKGR…ESIDIAFFTR (80 aa)) folds into the PUA domain.

This sequence belongs to the methyltransferase superfamily. RlmI family.

It is found in the cytoplasm. It catalyses the reaction cytidine(1962) in 23S rRNA + S-adenosyl-L-methionine = 5-methylcytidine(1962) in 23S rRNA + S-adenosyl-L-homocysteine + H(+). Functionally, specifically methylates the cytosine at position 1962 (m5C1962) of 23S rRNA. This chain is Ribosomal RNA large subunit methyltransferase I, found in Escherichia coli O127:H6 (strain E2348/69 / EPEC).